The primary structure comprises 637 residues: Pentatricopeptide repeat-containing protein At1g12300, mitochondrial (637 aa).

Residues 1-95 constitute a mitochondrion transit peptide; that stretch reads MVKLMIRRLS…PTVIDFSRLF (95 aa). 15 PPR repeats span residues 87–121, 122–156, 157–191, 192–226, 227–261, 262–296, 297–331, 332–366, 367–401, 402–436, 437–471, 472–506, 507–541, 542–576, and 577–611; these read TVID…GIAH, NLYT…GYEP, NTIT…GHKP, DLIT…GCQP, NAVT…NIKL, DAVK…GITT, NIIT…KINP, NVVT…GIAP, DTIT…GCDP, NIRT…GVVA, DTVT…KVPP, NIVT…KMEL, DIGI…GVKP, GVKT…GHAP, and DGWT…GFSV.

The protein belongs to the PPR family. P subfamily.

Its subcellular location is the mitochondrion. This chain is Pentatricopeptide repeat-containing protein At1g12300, mitochondrial, found in Arabidopsis thaliana (Mouse-ear cress).